We begin with the raw amino-acid sequence, 675 residues long: MSLPKKLEEMQVEEASKLAQNLREILDRWSKLYYTKDAPEVEDYEYDEKYADLVALEEAFPEIITQDSITQRVGGEILEGFTKVTHTEPMLSMGDVFSRDELVEFDNRIQKNVGHPVDYNVELKIDGLAISLIYQDGELIQGSTRGDGNIGEDITKNLKTIKSVPQKLTRPLSIEVRGECFMPKASFAKLNAQQLEDGKPVFANPRNAAAGSLRQLNTNVTKKRDLDTFIYTVVDSNQLGAKTQHQAIQMMAELGFNTNPTQEVCANLDEVWDYIAKYEGQREDLPYGIDGIVLKVNDLSLQQELGHTVKIPRWEIAYKFPPEEAATVVRDIEWTVGRTGVVTPTAVMDPVQLAGTTVSRATLNNVDQLTAKDVHIGDTVLLHKAGDIIPEITRVVLEKRPVGISELDIPTHCPSCGKELVHLNGEVALRCINPDCPAQIVARLEHFGSRNAMNIMGLGPKQIQQLYAKNFIHHFDDLYKLTSEELSQLDGFKEKRVNNLLEAIDNSRKNSLERLINGLGIQGVGTKMARTLAEKFGTMDNLMQTTIEEFDAVDTIGETLANNLATFFQSDVAQNMIDELKAVGVNMEYLGVKPAESPDGYYKGKKVVLTGKLEQYTRNELKERLISLGADVAGSVSKKTDILIAGADAGSKLTKAQALGIEILDETEAIAKFEQ.

NAD(+) contacts are provided by residues 43–47 (DYEYD), 92–93 (SM), and glutamate 122. Catalysis depends on lysine 124, which acts as the N6-AMP-lysine intermediate. Residues arginine 145, glutamate 179, lysine 295, and lysine 319 each coordinate NAD(+). Residues cysteine 413, cysteine 416, cysteine 431, and cysteine 436 each coordinate Zn(2+). A BRCT domain is found at 597-675 (SPDGYYKGKK…ETEAIAKFEQ (79 aa)).

It belongs to the NAD-dependent DNA ligase family. LigA subfamily. Mg(2+) serves as cofactor. Requires Mn(2+) as cofactor.

The enzyme catalyses NAD(+) + (deoxyribonucleotide)n-3'-hydroxyl + 5'-phospho-(deoxyribonucleotide)m = (deoxyribonucleotide)n+m + AMP + beta-nicotinamide D-nucleotide.. Its function is as follows. DNA ligase that catalyzes the formation of phosphodiester linkages between 5'-phosphoryl and 3'-hydroxyl groups in double-stranded DNA using NAD as a coenzyme and as the energy source for the reaction. It is essential for DNA replication and repair of damaged DNA. This Pediococcus pentosaceus (strain ATCC 25745 / CCUG 21536 / LMG 10740 / 183-1w) protein is DNA ligase.